The following is a 214-amino-acid chain: 3-isopropylmalate dehydratase small subunit (214 aa).

Belongs to the LeuD family. LeuD type 1 subfamily. In terms of assembly, heterodimer of LeuC and LeuD.

It catalyses the reaction (2R,3S)-3-isopropylmalate = (2S)-2-isopropylmalate. Its pathway is amino-acid biosynthesis; L-leucine biosynthesis; L-leucine from 3-methyl-2-oxobutanoate: step 2/4. Catalyzes the isomerization between 2-isopropylmalate and 3-isopropylmalate, via the formation of 2-isopropylmaleate. The chain is 3-isopropylmalate dehydratase small subunit from Alcanivorax borkumensis (strain ATCC 700651 / DSM 11573 / NCIMB 13689 / SK2).